The primary structure comprises 416 residues: tRNA(Met) cytidine acetate ligase (416 aa).

Residues 7–20 (VAEY…HLYL), Gly-102, Asn-166, and Arg-191 contribute to the ATP site.

This sequence belongs to the TmcAL family.

The protein localises to the cytoplasm. The enzyme catalyses cytidine(34) in elongator tRNA(Met) + acetate + ATP = N(4)-acetylcytidine(34) in elongator tRNA(Met) + AMP + diphosphate. Functionally, catalyzes the formation of N(4)-acetylcytidine (ac(4)C) at the wobble position of elongator tRNA(Met), using acetate and ATP as substrates. First activates an acetate ion to form acetyladenylate (Ac-AMP) and then transfers the acetyl group to tRNA to form ac(4)C34. The polypeptide is tRNA(Met) cytidine acetate ligase (Syntrophomonas wolfei subsp. wolfei (strain DSM 2245B / Goettingen)).